The chain runs to 329 residues: Cytosolic arginine sensor for mTORC1 subunit 2 (329 aa).

ACT domains are found at residues 72 to 139 and 262 to 322; these read ADAT…MHTL and ELWK…NALQ.

This sequence belongs to the GATS family. In terms of assembly, may form homodimers and heterodimers.

The protein resides in the cytoplasm. It localises to the cytosol. Functionally, functions as a negative regulator of the TORC1 signaling pathway. The chain is Cytosolic arginine sensor for mTORC1 subunit 2 from Xenopus tropicalis (Western clawed frog).